The sequence spans 84 residues: Small ribosomal subunit protein eS27 (84 aa).

The segment at 38–60 adopts a C4-type zinc-finger fold; it reads CPKCGATTTTFSHAHRQILCQKC.

It belongs to the eukaryotic ribosomal protein eS27 family. In terms of assembly, component of the small ribosomal subunit. It depends on Zn(2+) as a cofactor.

Its subcellular location is the cytoplasm. Component of the small ribosomal subunit. The ribosome is a large ribonucleoprotein complex responsible for the synthesis of proteins in the cell. Required for proper rRNA processing and maturation of 18S rRNAs. The sequence is that of Small ribosomal subunit protein eS27 (RPS27) from Entamoeba histolytica (strain ATCC 30459 / HM-1:IMSS / ABRM).